We begin with the raw amino-acid sequence, 263 residues long: Tryptophan synthase alpha chain (263 aa).

Residues Glu-49 and Asp-60 each act as proton acceptor in the active site.

It belongs to the TrpA family. In terms of assembly, tetramer of two alpha and two beta chains.

The enzyme catalyses (1S,2R)-1-C-(indol-3-yl)glycerol 3-phosphate + L-serine = D-glyceraldehyde 3-phosphate + L-tryptophan + H2O. The protein operates within amino-acid biosynthesis; L-tryptophan biosynthesis; L-tryptophan from chorismate: step 5/5. Its function is as follows. The alpha subunit is responsible for the aldol cleavage of indoleglycerol phosphate to indole and glyceraldehyde 3-phosphate. The polypeptide is Tryptophan synthase alpha chain (Roseobacter denitrificans (strain ATCC 33942 / OCh 114) (Erythrobacter sp. (strain OCh 114))).